Reading from the N-terminus, the 342-residue chain is Tetraacyldisaccharide 4'-kinase (342 aa).

Position 68-75 (T68–T75) interacts with ATP.

It belongs to the LpxK family.

The enzyme catalyses a lipid A disaccharide + ATP = a lipid IVA + ADP + H(+). The protein operates within glycolipid biosynthesis; lipid IV(A) biosynthesis; lipid IV(A) from (3R)-3-hydroxytetradecanoyl-[acyl-carrier-protein] and UDP-N-acetyl-alpha-D-glucosamine: step 6/6. In terms of biological role, transfers the gamma-phosphate of ATP to the 4'-position of a tetraacyldisaccharide 1-phosphate intermediate (termed DS-1-P) to form tetraacyldisaccharide 1,4'-bis-phosphate (lipid IVA). This Burkholderia thailandensis (strain ATCC 700388 / DSM 13276 / CCUG 48851 / CIP 106301 / E264) protein is Tetraacyldisaccharide 4'-kinase.